The chain runs to 584 residues: Mitochondrial sodium/calcium exchanger protein (584 aa).

The first 26 residues, 1 to 26, serve as a signal peptide directing secretion; it reads MAGRRLNLRWALSVLCVLLMAETVSG. At 27–95 the chain is on the extracellular side; it reads TRGSSTGAHI…GIFCHFPPSL (69 aa). Asparagine 60 carries an N-linked (GlcNAc...) asparagine glycan. The helical transmembrane segment at 96–116 threads the bilayer; it reads LPLAVTLYVSWLLYLFLILGV. Over 117 to 140 the chain is Cytoplasmic; sequence TAAKFFCPNLSAISTTLKLSHNVA. A helical transmembrane segment spans residues 141-161; the sequence is GVTFLAFGNGAPDIFSALVAF. The Extracellular portion of the chain corresponds to 162–168; sequence SDPHTAG. Residues 169–189 form a helical membrane-spanning segment; sequence LALGALFGAGVLVTTVVAGGI. The Cytoplasmic segment spans residues 190–200; sequence TILHPFMAASR. A helical transmembrane segment spans residues 201-221; that stretch reads PFFRDIVFYMVAVFLTFLMLF. At 222-226 the chain is on the extracellular side; the sequence is RGRVT. A helical transmembrane segment spans residues 227–247; it reads LAWALGYLGLYVFYVVTVILC. The Cytoplasmic portion of the chain corresponds to 248 to 325; the sequence is TWIYQRQRRG…KWRRKSAYWK (78 aa). A Phosphoserine; by PKA modification is found at serine 258. A helical membrane pass occupies residues 326 to 346; sequence ALKVFKLPVEFLLLLTVPVVD. At 347–360 the chain is on the extracellular side; the sequence is PDKDDQNWKRPLNC. Residues 361-381 form a helical membrane-spanning segment; it reads LHLVISPLVVVLTLQSGTYGV. Topologically, residues 382–383 are cytoplasmic; that stretch reads YE. The helical transmembrane segment at 384–404 threads the bilayer; that stretch reads IGGLVPVWVVVVIAGTALASV. Residues 405-416 lie on the Extracellular side of the membrane; it reads TFFATSDSQPPR. Residues 417–437 form a helical membrane-spanning segment; sequence LHWLFAFLGFLTSALWINAAA. The Cytoplasmic portion of the chain corresponds to 438–445; sequence TEVVNILR. The helical transmembrane segment at 446–466 threads the bilayer; that stretch reads SLGVVFRLSNTVLGLTLLAWG. The Extracellular portion of the chain corresponds to 467–487; the sequence is NSIGDAFSDFTLARQGYPRMA. Residues 488 to 508 form a helical membrane-spanning segment; it reads FSACFGGIIFNILVGVGLGCL. Over 509–524 the chain is Cytoplasmic; the sequence is LQISRSHTEVKLEPDG. Residues 525–545 traverse the membrane as a helical segment; sequence LLVWVLAGALGLSLVFSLVSV. The Extracellular portion of the chain corresponds to 546 to 558; sequence PLQCFQLSRVYGF. The chain crosses the membrane as a helical span at residues 559-579; that stretch reads CLLLFYLNFLVVALLTEFGVI. Over 580 to 584 the chain is Cytoplasmic; the sequence is HLKSM.

Belongs to the Ca(2+):cation antiporter (CaCA) (TC 2.A.19) family. SLC24A subfamily. Phosphorylation at Ser-258 by PKA prevents calcium overload. In terms of tissue distribution, present in pancreatic beta-cells (at protein level).

The protein localises to the mitochondrion inner membrane. The catalysed reaction is Ca(2+)(in) + 3 Na(+)(out) = Ca(2+)(out) + 3 Na(+)(in). It carries out the reaction 3 Li(+)(out) + Ca(2+)(in) = 3 Li(+)(in) + Ca(2+)(out). Its activity is regulated as follows. Inhibited by the sodium/calcium exchanger inhibitor CGP-37157. Strongly inhibited by zinc. Functionally, mitochondrial sodium/calcium antiporter that mediates sodium-dependent calcium efflux from mitochondrion, by mediating the exchange of 3 sodium ions per 1 calcium ion. Plays a central role in mitochondrial calcium homeostasis by mediating mitochondrial calcium extrusion: calcium efflux is essential for mitochondrial function and cell survival, notably in cardiomyocytes. Regulates rates of glucose-dependent insulin secretion in pancreatic beta-cells during the first phase of insulin secretion: acts by mediating efflux of calcium from mitochondrion, thereby affecting cytoplasmic calcium responses. Required for store-operated Ca(2+) entry (SOCE) and Ca(2+) release-activated Ca(2+) (CRAC) channel regulation: sodium transport by SLC8B1 leads to promote calcium-shuttling that modulates mitochondrial redox status, thereby regulating SOCE activity. Involved in B-lymphocyte chemotaxis. Able to transport Ca(2+) in exchange of either Li(+) or Na(+), explaining how Li(+) catalyzes Ca(2+) exchange. In contrast to other members of the family its function is independent of K(+). The chain is Mitochondrial sodium/calcium exchanger protein from Homo sapiens (Human).